The following is a 163-amino-acid chain: Homoaconitase small subunit (163 aa).

Belongs to the LeuD family. Heterodimer of HacA and HacB.

It carries out the reaction (2R,3S)-homoisocitrate = cis-homoaconitate + H2O. It participates in amino-acid biosynthesis; L-lysine biosynthesis via AAA pathway; L-alpha-aminoadipate from 2-oxoglutarate: step 3/5. With respect to regulation, is not inhibited by lysine. In terms of biological role, catalyzes the reversible hydration of cis-homoaconitate ((Z)-but-1-ene-1,2,4-tricarboxylate) to homoisocitrate ((1R,2S)-1-hydroxybutane-1,2,4-tricarboxylate). Can catalyze neither the dehydration of (R)-homocitrate ((2R)-2-hydroxybutane-1,2,4-tricarboxylate) into cis-homoaconitate in vitro, nor the reverse reaction. Is not active toward (S)-homocitrate, cis-aconitate or citrate as substrate. This is Homoaconitase small subunit (hacB) from Thermus thermophilus (strain ATCC BAA-163 / DSM 7039 / HB27).